The following is a 364-amino-acid chain: Lysophosphatidic acid receptor 1 (364 aa).

The Extracellular segment spans residues 1–50 (MAAAFTSSPVVSQPQFTAMNEQQCFSNESIAFFYNRSGKYLATEWNTVTK). 2 disulfides stabilise this stretch: Cys-24-Cys-190 and Cys-188-Cys-195. Residues Asn-27 and Asn-35 are each glycosylated (N-linked (GlcNAc...) asparagine). Lys-39 provides a ligand contact to a 1-acyl-sn-glycero-3-phosphate. The chain crosses the membrane as a helical span at residues 51 to 75 (LVMGLGITVCIFIMLANLLVMVAIY). Topologically, residues 76-83 (VNRRFHFP) are cytoplasmic. Residues 84 to 107 (IYYLMANLAAADFFAGLAYFYLMF) traverse the membrane as a helical segment. Residues 108–121 (NTGPNTRRLTVSTW) lie on the Extracellular side of the membrane. The helical transmembrane segment at 122-144 (LLRQGLIDTSLTVSVANLLAIAI) threads the bilayer. 124 to 129 (RQGLID) is a binding site for a 1-acyl-sn-glycero-3-phosphate. The Cytoplasmic segment spans residues 145–163 (ERHITVFRMQLHARMSNRR). A helical membrane pass occupies residues 164 to 184 (VVVVIVVIWTMAIVMGAIPSV). Residues 185–204 (GWNCICDIENCSNMAPLYSD) are Extracellular-facing. The chain crosses the membrane as a helical span at residues 205 to 225 (SYLVFWAIFNLVTFVVMVVLY). Residue Trp-210 participates in a 1-acyl-sn-glycero-3-phosphate binding. The Cytoplasmic segment spans residues 226–255 (AHIFGYVRQRTMRMSRHSSGPRRNRDTMMS). The helical transmembrane segment at 256 to 280 (LLKTVVIVLGAFIICWTPGLVLLLL) threads the bilayer. Residues 281–294 (DVCCPQCDVLAYEK) lie on the Extracellular side of the membrane. Residues Cys-284 and Cys-287 are joined by a disulfide bond. Residues 295 to 315 (FFLLLAEFNSAMNPIIYSYRD) form a helical membrane-spanning segment. At 316–364 (KEMSATFRQILCCQRSENTSGPTEGSDRSASSLNHTILAGVHSNDHSVV) the chain is on the cytoplasmic side. Ser-341 carries the phosphoserine modification. At Thr-351 the chain carries Phosphothreonine.

It belongs to the G-protein coupled receptor 1 family. Interacts with RALA and GRK2. Interacts with GNAQ and GNA13. Interacts with CD14; the interaction is enhanced by exposure to bacterial lipopolysaccharide (LPS). Post-translationally, N-glycosylated.

The protein resides in the cell surface. It is found in the cell membrane. The protein localises to the endosome. Functionally, receptor for lysophosphatidic acid (LPA). Plays a role in the reorganization of the actin cytoskeleton, cell migration, differentiation and proliferation, and thereby contributes to the responses to tissue damage and infectious agents. Activates downstream signaling cascades via the G(i)/G(o), G(12)/G(13), and G(q) families of heteromeric G proteins. Signaling inhibits adenylyl cyclase activity and decreases cellular cAMP levels. Signaling triggers an increase of cytoplasmic Ca(2+) levels. Activates RALA; this leads to the activation of phospholipase C (PLC) and the formation of inositol 1,4,5-trisphosphate. Signaling mediates activation of down-stream MAP kinases. Contributes to the regulation of cell shape. Promotes Rho-dependent reorganization of the actin cytoskeleton in neuronal cells and neurite retraction. Promotes the activation of Rho and the formation of actin stress fibers. Promotes formation of lamellipodia at the leading edge of migrating cells via activation of RAC1. Through its function as LPA receptor, plays a role in chemotaxis and cell migration, including responses to injury and wounding. Plays a role in triggering inflammation in response to bacterial lipopolysaccharide (LPS) via its interaction with CD14. Promotes cell proliferation in response to LPA. Inhibits the intracellular ciliogenesis pathway in response to LPA and through AKT1 activation. Required for normal skeleton development. May play a role in osteoblast differentiation. Required for normal brain development. Required for normal proliferation, survival and maturation of newly formed neurons in the adult dentate gyrus. Plays a role in pain perception and in the initiation of neuropathic pain. The sequence is that of Lysophosphatidic acid receptor 1 (LPAR1) from Bos taurus (Bovine).